The chain runs to 116 residues: NADH-ubiquinone oxidoreductase chain 3 (116 aa).

The next 3 helical transmembrane spans lie at 4-24 (FMVMIMLTLTLSSIMALLAFW), 56-76 (FFLVAILFLLFDLEIALLLPS), and 87-107 (FTLLWASLFVLLLTLGLIYEW).

The protein belongs to the complex I subunit 3 family.

It localises to the mitochondrion membrane. The catalysed reaction is a ubiquinone + NADH + 5 H(+)(in) = a ubiquinol + NAD(+) + 4 H(+)(out). In terms of biological role, core subunit of the mitochondrial membrane respiratory chain NADH dehydrogenase (Complex I) that is believed to belong to the minimal assembly required for catalysis. Complex I functions in the transfer of electrons from NADH to the respiratory chain. The immediate electron acceptor for the enzyme is believed to be ubiquinone. The protein is NADH-ubiquinone oxidoreductase chain 3 (MT-ND3) of Petromyzon marinus (Sea lamprey).